The following is a 594-amino-acid chain: MASLPVNKIIPSSTTLLSSSNNNRRRNNSSIRCQKAVSPAAETAAVSPSVDAARLEPRVEERDGFWVLKEEFRSGINPAEKVKIEKDPMKLFIEDGISDLATLSMEEVDKSKHNKDDIDVRLKWLGLFHRRKHHYGRFMMRLKLPNGVTTSEQTRYLASVIKKYGKDGCADVTTRQNWQIRGVVLPDVPEIIKGLESVGLTSLQSGMDNVRNPVGNPLAGIDPHEIVDTRPFTNLISQFVTANSRGNLSITNLPRKWNPCVIGSHDLYEHPHINDLAYMPATKNGKFGFNLLVGGFFSIKRCEEAIPLDAWVSAEDVVPVCKAMLEAFRDLGFRGNRQKCRMMWLIDELGMEAFRGEVEKRMPEQVLERASSEELVQKDWERREYLGVHPQKQQGLSFVGLHIPVGRLQADEMEELARIADVYGSGELRLTVEQNIIIPNVENSKIDSLLNEPLLKERYSPEPPILMKGLVACTGSQFCGQAIIETKARALKVTEEVQRLVSVTRPVRMHWTGCPNSCGQVQVADIGFMGCMTRDENGKPCEGADVFVGGRIGSDSHLGDIYKKAVPCKDLVPVVAEILINQFGAVPREREEAE.

A chloroplast-targeting transit peptide spans 1–32; the sequence is MASLPVNKIIPSSTTLLSSSNNNRRRNNSSIR. A compositionally biased stretch (low complexity) spans 13–22; the sequence is STTLLSSSNN. A disordered region spans residues 13-36; it reads STTLLSSSNNNRRRNNSSIRCQKA. [4Fe-4S] cluster is bound by residues Cys-473, Cys-479, Cys-514, and Cys-518. Siroheme is bound at residue Cys-518.

It belongs to the nitrite and sulfite reductase 4Fe-4S domain family. As to quaternary structure, monomer. Siroheme serves as cofactor. [4Fe-4S] cluster is required as a cofactor.

The protein localises to the plastid. It localises to the chloroplast. The catalysed reaction is 6 oxidized [2Fe-2S]-[ferredoxin] + NH4(+) + 2 H2O = nitrite + 6 reduced [2Fe-2S]-[ferredoxin] + 8 H(+). Its pathway is nitrogen metabolism; nitrate reduction (assimilation). The protein is Ferredoxin--nitrite reductase, chloroplastic (NIR) of Spinacia oleracea (Spinach).